The following is a 297-amino-acid chain: Protease HtpX homolog (297 aa).

The next 2 membrane-spanning stretches (helical) occupy residues Ile5–Ile25 and Ile44–Leu64. His155 provides a ligand contact to Zn(2+). Residue Glu156 is part of the active site. Residue His159 participates in Zn(2+) binding. Helical transmembrane passes span Leu170–Val190 and Phe204–Ala224. A Zn(2+)-binding site is contributed by Glu230.

The protein belongs to the peptidase M48B family. The cofactor is Zn(2+).

The protein resides in the cell membrane. The protein is Protease HtpX homolog of Bacillus licheniformis (strain ATCC 14580 / DSM 13 / JCM 2505 / CCUG 7422 / NBRC 12200 / NCIMB 9375 / NCTC 10341 / NRRL NRS-1264 / Gibson 46).